We begin with the raw amino-acid sequence, 46 residues long: Small, acid-soluble spore protein N (46 aa).

Positions 1–46 are disordered; that stretch reads MAKMKHGSAQFRPDHLGTQPRKSDANKGKKMNTKGNENPQYIPPKG.

It belongs to the SspN family.

The protein localises to the spore core. This Halalkalibacterium halodurans (strain ATCC BAA-125 / DSM 18197 / FERM 7344 / JCM 9153 / C-125) (Bacillus halodurans) protein is Small, acid-soluble spore protein N.